The sequence spans 588 residues: Retrograde regulation protein 2 (588 aa).

Belongs to the GppA/Ppx family.

Functionally, required for a novel path of interorganelle communication between mitochondria, peroxisomes and the nucleus, thereby maintaining a functional metabolic interaction between the tricarboxylic acid and glyoxylate cycles. In particular, required for the retrograde expression of the peroxisomal isoform of citrate synthase, CIT2. The polypeptide is Retrograde regulation protein 2 (RTG2) (Saccharomyces cerevisiae (strain ATCC 204508 / S288c) (Baker's yeast)).